Consider the following 327-residue polypeptide: rRNA 2'-O-methyltransferase fibrillarin (327 aa).

Residues 1 to 95 (MKPGFSPRGG…NQSGKNVMVE (95 aa)) are disordered. Gly residues predominate over residues 7–80 (PRGGGFGGRG…GGNRGRGGGR (74 aa)). Residues arginine 8, arginine 15, arginine 21, arginine 24, arginine 28, and arginine 31 each carry the asymmetric dimethylarginine modification. Glycyl lysine isopeptide (Lys-Gly) (interchain with G-Cter in SUMO2) cross-links involve residues lysine 90, lysine 108, and lysine 115. Lysine 108 bears the N6-acetyllysine mark. Phosphoserine is present on serine 122. The residue at position 127 (lysine 127) is an N6-acetyllysine. A phosphoserine mark is found at serine 130 and serine 132. Glycyl lysine isopeptide (Lys-Gly) (interchain with G-Cter in SUMO2) cross-links involve residues lysine 137, lysine 149, and lysine 164. Residues 178–179 (TT) and 197–198 (EF) contribute to the S-adenosyl-L-methionine site. N6-acetyllysine is present on residues lysine 211 and lysine 212. S-adenosyl-L-methionine is bound by residues 222 to 223 (DA) and 242 to 245 (DVAQ).

This sequence belongs to the methyltransferase superfamily. Fibrillarin family. Component of box C/D small nucleolar ribonucleoprotein (snoRNP) particles that contain SNU13, FBL, NOP5 and NOP56, plus a guide RNA. It is associated with the U3, U8, U13, X and Y small nuclear RNAs. Component of several ribosomal and nucleolar protein complexes. Part of the small subunit (SSU) processome, composed of more than 70 proteins and the RNA chaperone small nucleolar RNA (snoRNA) U3. Interacts with PRMT5 and UTP20. Interacts with DDX5 and C1QBP. Interacts with NOL11. Interacts with PIH1D1. Interacts with RRP1B. Interacts with NOLC1. Interacts with SDE2. Interacts with NOP2 and NOP56. In terms of processing, by homology to other fibrillarins, some or all of the N-terminal domain arginines are modified to asymmetric dimethylarginine (DMA). Ubiquitinated. Ubiquitination leads to proteasomal degradation. Deubiquitinated by USP36. Post-translationally, acetylated by CREBBP/CBP, preventing methylation of 'Gln-105' of histone H2A (H2AQ104me), without affecting rRNA methylation. Deacetylation by SIRT7 restores methylation of 'Gln-105' of histone H2A (H2AQ104me).

The protein localises to the nucleus. It is found in the nucleolus. It localises to the nucleoplasm. It carries out the reaction L-glutaminyl-[histone H2A] + S-adenosyl-L-methionine = N(5)-methyl-L-glutaminyl-[histone H2A] + S-adenosyl-L-homocysteine + H(+). The enzyme catalyses a ribonucleotide in rRNA + S-adenosyl-L-methionine = a 2'-O-methylribonucleotide in rRNA + S-adenosyl-L-homocysteine + H(+). The catalysed reaction is a ribonucleotide in U6 snRNA + S-adenosyl-L-methionine = a 2'-O-methylribonucleotide in U6 snRNA + S-adenosyl-L-homocysteine + H(+). In terms of biological role, S-adenosyl-L-methionine-dependent methyltransferase that has the ability to methylate both RNAs and proteins. Involved in pre-rRNA processing by catalyzing the site-specific 2'-hydroxyl methylation of ribose moieties in pre-ribosomal RNA. Site specificity is provided by a guide RNA that base pairs with the substrate. Methylation occurs at a characteristic distance from the sequence involved in base pairing with the guide RNA. Probably catalyzes 2'-O-methylation of U6 snRNAs in box C/D RNP complexes. U6 snRNA 2'-O-methylation is required for mRNA splicing fidelity. Also acts as a protein methyltransferase by mediating methylation of 'Gln-105' of histone H2A (H2AQ104me), a modification that impairs binding of the FACT complex and is specifically present at 35S ribosomal DNA locus. Part of the small subunit (SSU) processome, first precursor of the small eukaryotic ribosomal subunit. During the assembly of the SSU processome in the nucleolus, many ribosome biogenesis factors, an RNA chaperone and ribosomal proteins associate with the nascent pre-rRNA and work in concert to generate RNA folding, modifications, rearrangements and cleavage as well as targeted degradation of pre-ribosomal RNA by the RNA exosome. This chain is rRNA 2'-O-methyltransferase fibrillarin, found in Mus musculus (Mouse).